Reading from the N-terminus, the 314-residue chain is Cytochrome bo(3) ubiquinol oxidase subunit 2 (314 aa).

A signal peptide spans 1 to 23 (MSKKRYPRLFGILPFLGMLLLSG). Cysteine 24 is lipidated: N-palmitoyl cysteine. Cysteine 24 carries the S-diacylglycerol cysteine lipid modification. At 24-42 (CNWTLLDPKGQVGIEQKNL) the chain is on the periplasmic side. A helical membrane pass occupies residues 43-63 (ILIATGLMLLVVIPVIIMTVV). The Cytoplasmic segment spans residues 64–86 (FAWKYRASNKAATYTPDWSHSTK). Residues 87–107 (IEAAVWIIPILIIIALGYFTY) traverse the membrane as a helical segment. Topologically, residues 108–314 (HSTHKLDPYR…SMQPAAGAEE (207 aa)) are periplasmic. A compositionally biased stretch (basic and acidic residues) spans 278–293 (YEGMNRGRPSHEEAGS). The segment at 278–314 (YEGMNRGRPSHEEAGSKDLATTKGVESSMQPAAGAEE) is disordered.

The protein belongs to the cytochrome c oxidase subunit 2 family. Heterooctamer of two A chains, two B chains, two C chains and two D chains.

It is found in the cell inner membrane. Functionally, cytochrome bo(3) ubiquinol terminal oxidase is the component of the aerobic respiratory chain of E.coli that predominates when cells are grown at high aeration. Has proton pump activity across the membrane in addition to electron transfer, pumping 2 protons/electron. The chain is Cytochrome bo(3) ubiquinol oxidase subunit 2 (cyoA) from Pseudomonas putida (Arthrobacter siderocapsulatus).